Reading from the N-terminus, the 114-residue chain is Evasin P1096 (114 aa).

The first 23 residues, 1 to 23, serve as a signal peptide directing secretion; that stretch reads MELNAFTILHIAVFIAVGYYANT. 3 disulfides stabilise this stretch: cysteine 47-cysteine 65, cysteine 51-cysteine 67, and cysteine 61-cysteine 78. N-linked (GlcNAc...) asparagine glycosylation occurs at asparagine 50. A disordered region spans residues 89 to 114; sequence DPSQDPSIDEAAPRESVSKRRSNGES. The span at 99 to 114 shows a compositional bias: basic and acidic residues; that stretch reads AAPRESVSKRRSNGES.

Its subcellular location is the secreted. Its function is as follows. Salivary chemokine-binding protein which binds to host chemokine CXCL8. The polypeptide is Evasin P1096 (Ixodes ricinus (Common tick)).